We begin with the raw amino-acid sequence, 430 residues long: Serine hydroxymethyltransferase (430 aa).

Glycine 120–isoleucine 122 provides a ligand contact to (6S)-5,6,7,8-tetrahydrofolate. Residue lysine 226 is modified to N6-(pyridoxal phosphate)lysine.

It belongs to the SHMT family. As to quaternary structure, homodimer. It depends on pyridoxal 5'-phosphate as a cofactor.

It is found in the cytoplasm. The protein operates within amino-acid biosynthesis; glycine biosynthesis; glycine from L-serine: step 1/1. Functionally, catalyzes the reversible interconversion of serine and glycine with a modified folate serving as the one-carbon carrier. Also exhibits a pteridine-independent aldolase activity toward beta-hydroxyamino acids, producing glycine and aldehydes, via a retro-aldol mechanism. This chain is Serine hydroxymethyltransferase, found in Pyrobaculum islandicum (strain DSM 4184 / JCM 9189 / GEO3).